The primary structure comprises 354 residues: Ubiquinol oxidase 1a, mitochondrial (354 aa).

The N-terminal 62 residues, 1–62, are a transit peptide targeting the mitochondrion; sequence MMITRGGAKA…RAPTIGGMRF (62 aa). Positions 68 to 99 are disordered; the sequence is LGEKTPMKEEDANQKKTENESTGGDAAGGNNK. Positions 72–86 are enriched in basic and acidic residues; that stretch reads TPMKEEDANQKKTEN. Residues 179–199 form a helical membrane-spanning segment; the sequence is AMMLETVAAVPGMVGGMLLHC. The Fe cation site is built by glutamate 183, glutamate 222, and histidine 225. The chain crosses the membrane as a helical span at residues 241 to 261; that stretch reads ALVITVQGVFFNAYFLGYLIS. Fe cation is bound by residues glutamate 273, glutamate 324, and histidine 327.

Belongs to the alternative oxidase family. Homodimer; disulfide-linked. Requires Fe cation as cofactor. As to expression, expressed in roots, stems, cotyledons, leaves and flowers. High expression in sepals.

It localises to the mitochondrion inner membrane. It carries out the reaction 2 a ubiquinol + O2 = 2 a ubiquinone + 2 H2O. Its activity is regulated as follows. When the two monomeric subunits are covalently linked by a S-S bond, the enzyme is essentially inactive. When the disulfide bond is reduced, its component sulfhydryls can associate with K-keto acids through formation of a thiohemiacetal, resulting in enzyme activation. Activated by glyoxylate, irrespective to the substitution found at Cys-127. That suggests the presence of a second activation site, possibly Cys-177. Its function is as follows. Catalyzes the cyanide-resistant oxidation of ubiquinol and the reduction of molecular oxygen to water, but does not translocate protons and consequently is not linked to oxidative phosphorylation. Increases respiration when the cytochrome respiratory pathway is restricted, or in response to low temperatures. This chain is Ubiquinol oxidase 1a, mitochondrial (AOX1A), found in Arabidopsis thaliana (Mouse-ear cress).